Reading from the N-terminus, the 194-residue chain is Cyclin-dependent kinase inhibitor 4 (194 aa).

Basic and acidic residues predominate over residues 49–58; it reads LELRSRRLEK. Disordered stretches follow at residues 49 to 70 and 107 to 139; these read LELRSRRLEKLPPPPPPPPRRR and TRETTPCSLIRDPDTISTPGSTTRRSHSSSHCK.

The protein belongs to the CDI family. ICK/KRP subfamily.

In Oryza sativa subsp. japonica (Rice), this protein is Cyclin-dependent kinase inhibitor 4 (KRP4).